Consider the following 188-residue polypeptide: Elongation factor P (188 aa).

An N6-(3,6-diaminohexanoyl)-5-hydroxylysine modification is found at K34.

It belongs to the elongation factor P family. Post-translationally, may be beta-lysylated on the epsilon-amino group of Lys-34 by the combined action of EpmA and EpmB, and then hydroxylated on the C5 position of the same residue by EpmC (if this protein is present). Lysylation is critical for the stimulatory effect of EF-P on peptide-bond formation. The lysylation moiety may extend toward the peptidyltransferase center and stabilize the terminal 3-CCA end of the tRNA. Hydroxylation of the C5 position on Lys-34 may allow additional potential stabilizing hydrogen-bond interactions with the P-tRNA.

It is found in the cytoplasm. It participates in protein biosynthesis; polypeptide chain elongation. Functionally, involved in peptide bond synthesis. Alleviates ribosome stalling that occurs when 3 or more consecutive Pro residues or the sequence PPG is present in a protein, possibly by augmenting the peptidyl transferase activity of the ribosome. Modification of Lys-34 is required for alleviation. In Coxiella burnetii (strain CbuG_Q212) (Coxiella burnetii (strain Q212)), this protein is Elongation factor P.